The following is a 73-amino-acid chain: Somatostatin-2 (73 aa).

Residues 1 to 45 (SAGLLTQEWSAVEDLLAQMSLPEADAQRDAEMVSTATGGGRMNQE) constitute a propeptide that is removed on maturation. The segment at 23 to 58 (EADAQRDAEMVSTATGGGRMNQESIEPPNNLPPRER) is disordered. Cys-62 and Cys-73 are disulfide-bonded.

It belongs to the somatostatin family.

The protein localises to the secreted. Functionally, somatostatin inhibits the release of somatotropin. This is Somatostatin-2 (sst2) from Platichthys flesus (European flounder).